The chain runs to 1199 residues: DNA-directed RNA polymerase subunit beta' (1199 aa).

Zn(2+) contacts are provided by C60, C62, C75, and C78. Positions 449, 451, and 453 each coordinate Mg(2+). Positions 818, 892, 899, and 902 each coordinate Zn(2+).

It belongs to the RNA polymerase beta' chain family. The RNAP catalytic core consists of 2 alpha, 1 beta, 1 beta' and 1 omega subunit. When a sigma factor is associated with the core the holoenzyme is formed, which can initiate transcription. Mg(2+) is required as a cofactor. The cofactor is Zn(2+).

It carries out the reaction RNA(n) + a ribonucleoside 5'-triphosphate = RNA(n+1) + diphosphate. Its function is as follows. DNA-dependent RNA polymerase catalyzes the transcription of DNA into RNA using the four ribonucleoside triphosphates as substrates. The sequence is that of DNA-directed RNA polymerase subunit beta' from Geobacillus kaustophilus (strain HTA426).